A 414-amino-acid chain; its full sequence is MGLKKFLEDIEHHFEPGGKHEKWFALYEAAATLFYTPGLVTKRSSHVRDSVDLKRIMIMVWLAVFPAMFWGMYNVGHQSITALNHLYSGAELATVISGNWHYWLTEMLGGTLSTQAGWASMMLLGATYFLPIYATVFLVGGFWEVLFCMVRKHEVNEGFFVTSILFALIVPPTLPLWQAALGITFGVVVAKEIFGGTGRNFLNPALAGRAFLFFAYPAQISGDVVWTAADGFSGATALSQWAQGGNGALINKVTGEAITWMDAFVGNIPGSIGEVSTLALAIGAAFIVYMGIASWRIIAGVMVGMIAISTLFNVIGSDTNAMFNMPWHWHLVLGGFAFGMFFMATDPVSASFTNKGKWAYGILIGAMCVMIRVVNPAYPEGMMLAILFANLFAPLFDHIVIEKNIKRRLARYGK.

4 helical membrane-spanning segments follow: residues 56–76, 82–104, 129–149, and 164–184; these read IMIM…YNVG, ALNH…HYWL, FLPI…LFCM, and ILFA…LGIT. At T236 the chain carries FMN phosphoryl threonine. The next 5 helical transmembrane spans lie at 275 to 295, 297 to 317, 325 to 345, 358 to 378, and 381 to 401; these read VSTL…IASW, IIAG…VIGS, MPWH…FMAT, WAYG…NPAY, and GMML…HIVI.

It belongs to the NqrB/RnfD family. In terms of assembly, composed of six subunits; NqrA, NqrB, NqrC, NqrD, NqrE and NqrF. FMN is required as a cofactor.

It is found in the cell inner membrane. The catalysed reaction is a ubiquinone + n Na(+)(in) + NADH + H(+) = a ubiquinol + n Na(+)(out) + NAD(+). NQR complex catalyzes the reduction of ubiquinone-1 to ubiquinol by two successive reactions, coupled with the transport of Na(+) ions from the cytoplasm to the periplasm. NqrA to NqrE are probably involved in the second step, the conversion of ubisemiquinone to ubiquinol. The chain is Na(+)-translocating NADH-quinone reductase subunit B from Vibrio anguillarum (Listonella anguillarum).